Here is a 133-residue protein sequence, read N- to C-terminus: Ribosome-binding factor A (133 aa).

This sequence belongs to the RbfA family. Monomer. Binds 30S ribosomal subunits, but not 50S ribosomal subunits or 70S ribosomes.

It localises to the cytoplasm. Functionally, one of several proteins that assist in the late maturation steps of the functional core of the 30S ribosomal subunit. Associates with free 30S ribosomal subunits (but not with 30S subunits that are part of 70S ribosomes or polysomes). Required for efficient processing of 16S rRNA. May interact with the 5'-terminal helix region of 16S rRNA. This is Ribosome-binding factor A from Alteromonas mediterranea (strain DSM 17117 / CIP 110805 / LMG 28347 / Deep ecotype).